The chain runs to 1482 residues: Glutamate receptor ionotropic, NMDA 2B (1482 aa).

The signal sequence occupies residues methionine 1–alanine 26. The Extracellular portion of the chain corresponds to arginine 27–aspartate 557. Asparagine 74 is a glycosylation site (N-linked (GlcNAc...) asparagine). A disulfide bridge connects residues cysteine 86 and cysteine 321. 2 residues coordinate Zn(2+): histidine 127 and glutamate 284. N-linked (GlcNAc...) asparagine glycans are attached at residues asparagine 341, asparagine 348, asparagine 444, and asparagine 491. Cystine bridges form between cysteine 429-cysteine 456 and cysteine 436-cysteine 457. L-glutamate contacts are provided by threonine 514 and arginine 519. The N-linked (GlcNAc...) asparagine glycan is linked to asparagine 542. Residues valine 558–valine 576 traverse the membrane as a helical segment. Residues phenylalanine 577–glycine 603 lie on the Cytoplasmic side of the membrane. Positions lysine 604–proline 623 form an intramembrane region, discontinuously helical. The tract at residues lysine 604–proline 623 is pore-forming. Residues lysine 624–isoleucine 630 lie on the Cytoplasmic side of the membrane. A helical transmembrane segment spans residues methionine 631–tyrosine 646. The Extracellular segment spans residues threonine 647 to asparagine 817. N-linked (GlcNAc...) asparagine glycosylation is present at asparagine 688. L-glutamate is bound by residues serine 690, threonine 691, and aspartate 732. Cysteine 746 and cysteine 801 are disulfide-bonded. The chain crosses the membrane as a helical span at residues methionine 818–isoleucine 837. Residues cysteine 838–valine 1482 are Cytoplasmic-facing. A phosphoserine mark is found at serine 882, serine 886, serine 917, and serine 920. Tyrosine 962 and tyrosine 1039 each carry phosphotyrosine. Serine 1058, serine 1061, and serine 1064 each carry phosphoserine. Phosphotyrosine is present on residues tyrosine 1109 and tyrosine 1133. Phosphoserine is present on serine 1143. Tyrosine 1155 carries the phosphotyrosine modification. A disordered region spans residues aspartate 1161–proline 1194. Phosphoserine is present on residues serine 1255 and serine 1259. The disordered stretch occupies residues proline 1269 to glutamine 1301. Over residues valine 1272–lysine 1289 the composition is skewed to polar residues. Positions alanine 1290–glutamine 1301 are enriched in basic residues. Residues lysine 1292–tyrosine 1304 form an interaction with DAPK1 region. Serine 1303 carries the post-translational modification Phosphoserine. Tyrosine 1472 is modified (phosphotyrosine). Positions serine 1480–valine 1482 match the PDZ-binding motif.

The protein belongs to the glutamate-gated ion channel (TC 1.A.10.1) family. NR2B/GRIN2B subfamily. Heterotetramer. Forms heterotetrameric channels composed of two GluN1/zeta subunits (GRIN1), and two identical GluN2/epsilon subunits (GRIN2A, GRIN2B, GRIN2C or GRIN2D) or GluN3 subunits (GRIN3A or GRIN3B) (in vitro). Can also form heterotetrameric channels that contain at least two GluN1 subunits and at least two different GluN2 subunits (or a combination of one GluN2 and one GluN3 subunits) (in vitro). In vivo, the subunit composition may depend on the expression levels of the different subunits. Found in a complex with GRIN1, GRIN3A and PPP2CB. Found in a complex with GRIN1 and GRIN3B. Interacts with MAGI3. Interacts with HIP1 and NETO1. Interacts with PDZ domains of PATJ, DLG3 and DLG4. Interacts with DAPK1. Found in a complex with GRIN1 and PRR7. Interacts with PRR7. Interacts with CAMK2A. Interacts with ARC; preventing ARC oligomerization. Interacts with TMEM25. Interacts (via the extreme C-terminus) with FRMPD2 (via the second PDZ domain); the interaction is direct and is likely to promote NMDAR-mediated neural signal transmission. Interacts with FAM81A; the interaction facilitates condensate formation via liquid-liquid phase separation. Post-translationally, phosphorylated on tyrosine residues. Phosphorylation at Ser-1303 by DAPK1 enhances synaptic NMDA receptor channel activity. In terms of tissue distribution, expressed in the hippocampus including the dentate gyrus (at protein level). Detected in adult olfactory bulb, brain cortex, hippocampus, striatum, thalamus, superior colliculus, with much lower levels in inferior colliculus, midbrain and cerebellum.

It localises to the cell membrane. Its subcellular location is the postsynaptic cell membrane. It is found in the late endosome. The protein resides in the lysosome. The protein localises to the cytoplasm. It localises to the cytoskeleton. It catalyses the reaction Ca(2+)(in) = Ca(2+)(out). The enzyme catalyses Na(+)(in) = Na(+)(out). The catalysed reaction is K(+)(in) = K(+)(out). NMDA glutamate receptor activity is inhibited by micromolar levels of zinc ions. NMDA glutamate receptor activity is inhibited by ifenprodil. Its function is as follows. Component of N-methyl-D-aspartate (NMDA) receptors (NMDARs) that function as heterotetrameric, ligand-gated cation channels with high calcium permeability and voltage-dependent block by Mg(2+). Participates in synaptic plasticity for learning and memory formation by contributing to the long-term depression (LTD) of hippocampus membrane currents. Channel activation requires binding of the neurotransmitter L-glutamate to the GluN2 subunit, glycine or D-serine binding to the GluN1 subunit, plus membrane depolarization to eliminate channel inhibition by Mg(2+). NMDARs mediate simultaneously the potasium efflux and the influx of calcium and sodium. Each GluN2 subunit confers differential attributes to channel properties, including activation, deactivation and desensitization kinetics, pH sensitivity, Ca2(+) permeability, and binding to allosteric modulators. In concert with DAPK1 at extrasynaptic sites, acts as a central mediator for stroke damage. Its phosphorylation at Ser-1303 by DAPK1 enhances synaptic NMDA receptor channel activity inducing injurious Ca2+ influx through them, resulting in an irreversible neuronal death. This is Glutamate receptor ionotropic, NMDA 2B from Rattus norvegicus (Rat).